Reading from the N-terminus, the 902-residue chain is Cytosolic 10-formyltetrahydrofolate dehydrogenase (902 aa).

The tract at residues 1 to 310 (MKIAVIGQSL…PASQYFKTAD (310 aa)) is hydrolase domain. (6R)-10-formyltetrahydrofolate is bound at residue 88-90 (QFI). His-106 acts as the Proton donor in catalysis. A (6R)-10-formyltetrahydrofolate-binding site is contributed by Asp-142. Residues 318–395 (EEEQKVSEEI…EFIQMVVRRM (78 aa)) enclose the Carrier domain. Ser-354 carries the post-translational modification O-(pantetheine 4'-phosphoryl)serine. The interval 417-902 (TVKIPHQLFI…LKTKAVTIEY (486 aa)) is aldehyde dehydrogenase domain. NADP(+) contacts are provided by residues 571–573 (IPW), 597–600 (KPAQ), 630–635 (GSLIGQ), 650–651 (GS), and 673–674 (EL). Glu-673 acts as the Proton acceptor in catalysis. Cys-707 (proton donor) is an active-site residue. NADP(+)-binding positions include Lys-757 and 804–806 (ESF).

The protein in the N-terminal section; belongs to the GART family. This sequence in the C-terminal section; belongs to the aldehyde dehydrogenase family. ALDH1L subfamily. In terms of assembly, homotetramer. Phosphopantetheinylation at Ser-354 by AASDHPPT is required for the formyltetrahydrofolate dehydrogenase activity.

Its subcellular location is the cytoplasm. The protein resides in the cytosol. It catalyses the reaction (6R)-10-formyltetrahydrofolate + NADP(+) + H2O = (6S)-5,6,7,8-tetrahydrofolate + CO2 + NADPH + H(+). Cytosolic 10-formyltetrahydrofolate dehydrogenase that catalyzes the NADP(+)-dependent conversion of 10-formyltetrahydrofolate to tetrahydrofolate and carbon dioxide. May also have an NADP(+)-dependent aldehyde dehydrogenase activity towards formaldehyde, acetaldehyde, propionaldehyde, and benzaldehyde. This is Cytosolic 10-formyltetrahydrofolate dehydrogenase (aldh1l1) from Xenopus laevis (African clawed frog).